A 66-amino-acid polypeptide reads, in one-letter code: UPF0370 protein YpfN (66 aa).

The helical transmembrane segment at 4–24 (LAKYWWILVLVFLVGVLLNVI) threads the bilayer. Positions 39–66 (KPELPPHRDFNDKWDDEEDWPKKDQPKK) are disordered. Over residues 42 to 51 (LPPHRDFNDK) the composition is skewed to basic and acidic residues.

This sequence belongs to the UPF0370 family.

It is found in the cell membrane. In Salmonella paratyphi A (strain AKU_12601), this protein is UPF0370 protein YpfN.